Reading from the N-terminus, the 730-residue chain is Jacalin-related lectin 5 (730 aa).

The 126-residue stretch at 1 to 126 folds into the Jacalin-type lectin 1 domain; sequence MSWDDGKHTK…LNSIDAHFAP (126 aa). The interval 121-450 is disordered; it reads DAHFAPAPPP…GNQWDDGTDH (330 aa). 4 stretches are compositionally biased toward low complexity: residues 138 to 153, 168 to 179, 196 to 207, and 248 to 261; these read GASG…GSAG, AGGSKPSSGSAG, and TEKN…SSGS. The segment covering 275 to 307 has biased composition (polar residues); the sequence is ETVSNIGDTESNAGGSKSNDGANNGASGIESNA. A compositionally biased stretch (gly residues) spans 314-323; sequence FGAGGTGGIG. Over residues 343–358 the composition is skewed to low complexity; that stretch reads DGASGIGSNDGSTGTN. Polar residues-rich tracts occupy residues 366-375 and 388-416; these read DSNIEGTENN and IGNS…TGGK. Residues 417–429 are compositionally biased toward low complexity; sequence ESNTGSESNTNSS. Jacalin-type lectin domains lie at 430–572 and 584–727; these read PQKL…YFVP and PNKV…YFIP.

It belongs to the jacalin lectin family.

The polypeptide is Jacalin-related lectin 5 (JAL5) (Arabidopsis thaliana (Mouse-ear cress)).